The primary structure comprises 108 residues: Cytochrome c (108 aa).

Heme c contacts are provided by cysteine 19, cysteine 22, histidine 23, and methionine 85.

This sequence belongs to the cytochrome c family. Post-translationally, binds 1 heme c group covalently per subunit.

The protein localises to the mitochondrion intermembrane space. In terms of biological role, electron carrier protein. The oxidized form of the cytochrome c heme group can accept an electron from the heme group of the cytochrome c1 subunit of cytochrome reductase. Cytochrome c then transfers this electron to the cytochrome oxidase complex, the final protein carrier in the mitochondrial electron-transport chain. This is Cytochrome c from Stellaria longipes (Longstalk starwort).